The following is a 477-amino-acid chain: Glycogen synthase (477 aa).

K15 provides a ligand contact to ADP-alpha-D-glucose.

The protein belongs to the glycosyltransferase 1 family. Bacterial/plant glycogen synthase subfamily.

The catalysed reaction is [(1-&gt;4)-alpha-D-glucosyl](n) + ADP-alpha-D-glucose = [(1-&gt;4)-alpha-D-glucosyl](n+1) + ADP + H(+). It participates in glycan biosynthesis; glycogen biosynthesis. Its function is as follows. Synthesizes alpha-1,4-glucan chains using ADP-glucose. The sequence is that of Glycogen synthase from Escherichia coli O139:H28 (strain E24377A / ETEC).